A 96-amino-acid chain; its full sequence is Co-chaperonin GroES (96 aa).

The protein belongs to the GroES chaperonin family. In terms of assembly, heptamer of 7 subunits arranged in a ring. Interacts with the chaperonin GroEL.

It is found in the cytoplasm. Functionally, together with the chaperonin GroEL, plays an essential role in assisting protein folding. The GroEL-GroES system forms a nano-cage that allows encapsulation of the non-native substrate proteins and provides a physical environment optimized to promote and accelerate protein folding. GroES binds to the apical surface of the GroEL ring, thereby capping the opening of the GroEL channel. The protein is Co-chaperonin GroES of Cupriavidus taiwanensis (strain DSM 17343 / BCRC 17206 / CCUG 44338 / CIP 107171 / LMG 19424 / R1) (Ralstonia taiwanensis (strain LMG 19424)).